A 1370-amino-acid chain; its full sequence is DNA-directed RNA polymerase subunit beta (1370 aa).

Belongs to the RNA polymerase beta chain family. In terms of assembly, the RNAP catalytic core consists of 2 alpha, 1 beta, 1 beta' and 1 omega subunit. When a sigma factor is associated with the core the holoenzyme is formed, which can initiate transcription.

It carries out the reaction RNA(n) + a ribonucleoside 5'-triphosphate = RNA(n+1) + diphosphate. Its function is as follows. DNA-dependent RNA polymerase catalyzes the transcription of DNA into RNA using the four ribonucleoside triphosphates as substrates. The protein is DNA-directed RNA polymerase subunit beta of Syntrophobacter fumaroxidans (strain DSM 10017 / MPOB).